The chain runs to 295 residues: Probable lipid kinase YegS-like (295 aa).

A DAGKc domain is found at 1–129 (MQGRKAMLVL…IDLGQAGDQL (129 aa)). ATP contacts are provided by residues threonine 39, 65 to 71 (GDGTLRD), and threonine 92. Mg(2+) is bound by residues methionine 210, aspartate 213, and leucine 215. The active-site Proton acceptor is glutamate 264.

The protein belongs to the diacylglycerol/lipid kinase family. YegS lipid kinase subfamily. The cofactor is Mg(2+). Ca(2+) is required as a cofactor.

The protein localises to the cytoplasm. Probably phosphorylates lipids; the in vivo substrate is unknown. The polypeptide is Probable lipid kinase YegS-like (Pseudomonas putida (strain ATCC 47054 / DSM 6125 / CFBP 8728 / NCIMB 11950 / KT2440)).